Here is a 333-residue protein sequence, read N- to C-terminus: (2R)-3-sulfolactate dehydrogenase (NADP(+)) (333 aa).

The protein belongs to the LDH2/MDH2 oxidoreductase family.

It carries out the reaction (2R)-3-sulfolactate + NADP(+) = 3-sulfopyruvate + NADPH + H(+). Functionally, catalyzes the reduction of sulfopyruvate to (R)-sulfolactate. Together with SlcC, provides a racemase system that converts (2S)-3-sulfolactate to (2R)-3-sulfolactate, which is degraded further by (2R)-sulfolactate sulfo-lyase. This Chromohalobacter salexigens (strain ATCC BAA-138 / DSM 3043 / CIP 106854 / NCIMB 13768 / 1H11) protein is (2R)-3-sulfolactate dehydrogenase (NADP(+)) (comC).